The following is a 93-amino-acid chain: UPF0367 protein tsr0804 (93 aa).

The protein belongs to the UPF0367 family.

The sequence is that of UPF0367 protein tsr0804 from Thermosynechococcus vestitus (strain NIES-2133 / IAM M-273 / BP-1).